We begin with the raw amino-acid sequence, 312 residues long: Protein ABIL2 (312 aa).

The tract at residues 173–287 is disordered; the sequence is TIRETPPPPV…TEQQQPSKSK (115 aa). The span at 183 to 199 shows a compositional bias: low complexity; it reads RKSTSQSSSPRQPPQRS. Positions 230–251 are enriched in polar residues; sequence SVATRKSASISRPTTPSKSRSI. Positions 269–279 are enriched in basic and acidic residues; the sequence is AFEKDNQKETE.

It belongs to the ABI family. In terms of assembly, binds SCAR.

It is found in the cytoplasm. It localises to the cytoskeleton. In terms of biological role, involved in regulation of actin and microtubule organization. Part of a WAVE complex that activates the Arp2/3 complex. This is Protein ABIL2 (ABIL2) from Arabidopsis thaliana (Mouse-ear cress).